The primary structure comprises 580 residues: Jasmonoyl--L-amino acid synthetase JAR6 (580 aa).

Serine 100 contacts ATP. Residue serine 103 participates in jasmonate binding. ATP contacts are provided by residues methionine 120, threonine 123, glycine 164, asparagine 169, and 332 to 337 (GSSEGW). 167 to 171 (TTNVY) contributes to the an L-alpha-amino acid binding site. 329–332 (ADYG) contributes to the jasmonate binding site. 534–538 (KILDH) lines the an L-alpha-amino acid pocket.

This sequence belongs to the IAA-amido conjugating enzyme family.

The catalysed reaction is a jasmonate + an L-alpha-amino acid + ATP = a jasmonyl-L-amino acid + AMP + diphosphate + H(+). Its function is as follows. Catalyzes the synthesis of jasmonate-amino acid conjugates by adenylation. Catalyzes the conjugation of jasmonate (JA) to Ile, Leu and Val. Catalyzes the conjugation of JA to Ile that may mediate defense signaling and resistance to the herbivore Manduca sexta caterpillars. The chain is Jasmonoyl--L-amino acid synthetase JAR6 (JAR6) from Nicotiana attenuata (Coyote tobacco).